The chain runs to 706 residues: Ribosomal RNA large subunit methyltransferase K/L (706 aa).

The THUMP domain occupies 43 to 154 (LMYQSLLWSR…RDMASVALDL (112 aa)).

The protein belongs to the methyltransferase superfamily. RlmKL family.

It is found in the cytoplasm. The enzyme catalyses guanosine(2445) in 23S rRNA + S-adenosyl-L-methionine = N(2)-methylguanosine(2445) in 23S rRNA + S-adenosyl-L-homocysteine + H(+). The catalysed reaction is guanosine(2069) in 23S rRNA + S-adenosyl-L-methionine = N(2)-methylguanosine(2069) in 23S rRNA + S-adenosyl-L-homocysteine + H(+). Specifically methylates the guanine in position 2445 (m2G2445) and the guanine in position 2069 (m7G2069) of 23S rRNA. This is Ribosomal RNA large subunit methyltransferase K/L from Yersinia pseudotuberculosis serotype O:1b (strain IP 31758).